Reading from the N-terminus, the 279-residue chain is Orotidine 5'-phosphate decarboxylase (279 aa).

Residues Asp-8, Lys-30, 58 to 67, Thr-117, Arg-177, Gln-186, Gly-206, and Arg-207 contribute to the substrate site; that span reads DLKFHDIPNT. Lys-60 acts as the Proton donor in catalysis.

It belongs to the OMP decarboxylase family. Type 1 subfamily. Homodimer.

The enzyme catalyses orotidine 5'-phosphate + H(+) = UMP + CO2. It functions in the pathway pyrimidine metabolism; UMP biosynthesis via de novo pathway; UMP from orotate: step 2/2. Its function is as follows. Catalyzes the decarboxylation of orotidine 5'-monophosphate (OMP) to uridine 5'-monophosphate (UMP). The sequence is that of Orotidine 5'-phosphate decarboxylase from Campylobacter jejuni subsp. jejuni serotype O:2 (strain ATCC 700819 / NCTC 11168).